Here is a 153-residue protein sequence, read N- to C-terminus: Movement protein (153 aa).

Disordered regions lie at residues 1 to 24 (MAQE…EQDP) and 121 to 153 (PWVA…RNQR). A compositionally biased stretch (polar residues) spans 121 to 138 (PWVATLIPSQSAGPPQRS).

The protein belongs to the luteoviruses movement protein family.

Functionally, transports viral genome to neighboring plant cells directly through plasmosdesmata, without any budding. The movement protein allows efficient cell to cell propagation, by bypassing the host cell wall barrier. The polypeptide is Movement protein (Avena byzantina (Oat)).